The primary structure comprises 170 residues: Glycine cleavage system H protein, mitochondrial (170 aa).

The N-terminal 47 residues, 1 to 47, are a transit peptide targeting the mitochondrion; sequence MLRTTRLWTTRMPTVSKLFLRNSSGNALNKNKLPFLYSSQGPQAVRY. Residues 61-143 form the Lipoyl-binding domain; it reads TAFVGITKYA…MGDGWLVKMK (83 aa). K102 is subject to N6-lipoyllysine.

Belongs to the GcvH family. In terms of assembly, component of the glycine decarboxylase complex (GDC), which is composed of four proteins: P, T, L and H. The cofactor is (R)-lipoate.

It is found in the mitochondrion. In terms of biological role, the glycine cleavage system (glycine decarboxylase complex) catalyzes the degradation of glycine. The H protein shuttles the methylamine group of glycine from the P protein to the T protein. In Saccharomyces cerevisiae (strain ATCC 204508 / S288c) (Baker's yeast), this protein is Glycine cleavage system H protein, mitochondrial (GCV3).